Consider the following 491-residue polypeptide: MDFLGLPTILLLVCISCFLIAAWRSTSQRGKEPPGPTPIPIIGNVFQLNPWDLMESFKELSKKYGPIFTIHLGPKKVVVLYGYDVVKEALIDNGEAFSGRGNLPLFEKVFKGTGIVTSNGESWRQMRRFALTTLRDFGMGKKSIEERIQEEARFLVERIRNTHEKPFNPTVFLMHAVSNIICSTVFGDRFDYEDKKFLDLIEMLDENERYQNRIQTQLYNFFPTILDYLPGPHKTLIKSIETVDDFITEIIRAHQESFDASCPRDFIDAFINKMQQEKENSYFTVESLTRTTLDLFLAGTGTTSTTLRYGLLILLKHPEIEEKMHKEIDRVVGRDRSPCMADRSQLPYTDAVIHEIQRFIDFLPVNLPRAVIKDTKLRDYFIPKDTMIFPLLSPILQDCKEFPNPEKFDPGHFLNANGTFRKSNYFMPFSAGKRICAGEGLARMELFLFLTSILQNFSLKPVKDRKDIDISPIVTSAANIPRPYEVSFIPR.

Heme is bound at residue cysteine 436.

The protein belongs to the cytochrome P450 family. It depends on heme as a cofactor.

It localises to the endoplasmic reticulum membrane. Its subcellular location is the microsome membrane. It carries out the reaction an organic molecule + reduced [NADPH--hemoprotein reductase] + O2 = an alcohol + oxidized [NADPH--hemoprotein reductase] + H2O + H(+). Cytochromes P450 are a group of heme-thiolate monooxygenases. In liver microsomes, this enzyme is involved in an NADPH-dependent electron transport pathway. It oxidizes a variety of structurally unrelated compounds, including steroids, fatty acids, and xenobiotics. The chain is Cytochrome P450 2H2 (CYP2H2) from Gallus gallus (Chicken).